The sequence spans 304 residues: Opsin-1 (304 aa).

The Extracellular segment spans residues 1–45 (MIHPEQVADMLRPTTSTTSSHVPGPVPTVVPTPTEYQTLGETGHR). Residues 46-66 (TLWVTFALMVLSSGIFALLSW) traverse the membrane as a helical segment. Residues 74 to 94 (LFHVITTLITVVASLSYFAMA) traverse the membrane as a helical segment. Residues 129 to 149 (YVDWALTTPLLLLELCLLAGV) traverse the membrane as a helical segment. A helical membrane pass occupies residues 154–174 (TLMAIVADVIMVLCGLFAALG). Residues 183 to 203 (WGWYTIGCFSYLFVIWHVALH) form a helical membrane-spanning segment. A helical membrane pass occupies residues 219–239 (FTGLAVFALLLWTAYPIIWGI). A helical transmembrane segment spans residues 252–272 (ILIYTVLDLLAKPVFGFWLLL). Lys-263 is subject to N6-(retinylidene)lysine. Residues 273 to 304 (SHRAMPETNIDLPGYWSHGLATEGRIRIGEED) lie on the Cytoplasmic side of the membrane.

The protein belongs to the archaeal/bacterial/fungal opsin family. Post-translationally, binds all-trans retinal via a protonated Schiff base linkage.

It is found in the membrane. Functionally, could facilitate a sensory photoresponse. In Neurospora crassa (strain ATCC 24698 / 74-OR23-1A / CBS 708.71 / DSM 1257 / FGSC 987), this protein is Opsin-1 (nop-1).